The following is a 225-amino-acid chain: 2-C-methyl-D-erythritol 4-phosphate cytidylyltransferase (225 aa).

Belongs to the IspD/TarI cytidylyltransferase family. IspD subfamily.

It carries out the reaction 2-C-methyl-D-erythritol 4-phosphate + CTP + H(+) = 4-CDP-2-C-methyl-D-erythritol + diphosphate. It participates in isoprenoid biosynthesis; isopentenyl diphosphate biosynthesis via DXP pathway; isopentenyl diphosphate from 1-deoxy-D-xylulose 5-phosphate: step 2/6. Catalyzes the formation of 4-diphosphocytidyl-2-C-methyl-D-erythritol from CTP and 2-C-methyl-D-erythritol 4-phosphate (MEP). The sequence is that of 2-C-methyl-D-erythritol 4-phosphate cytidylyltransferase from Haemophilus influenzae (strain 86-028NP).